Here is a 993-residue protein sequence, read N- to C-terminus: Glycogen phosphorylase 2 (993 aa).

The tract at residues 1–82 is disordered; sequence MEEKRSTNSP…SNQSEDPATQ (82 aa). Over residues 19-48 the composition is skewed to polar residues; sequence RSGSITSATSHPPRSNSNPKLVAKHQQQLY. The segment covering 58-77 has biased composition (low complexity); it reads EQQNQQPQQQQQKQTSNQSE. Lys763 carries the N6-(pyridoxal phosphate)lysine modification. Over residues 962–981 the composition is skewed to polar residues; that stretch reads VISGGDKTNNTLKPKQTTKG. The segment at 962–993 is disordered; the sequence is VISGGDKTNNTLKPKQTTKGFNIGGQPGNPTN. Residues 983–993 show a composition bias toward gly residues; it reads NIGGQPGNPTN.

This sequence belongs to the glycogen phosphorylase family. As to quaternary structure, homodimer. The cofactor is pyridoxal 5'-phosphate. The N-terminus is blocked. In terms of processing, enzyme activity requires processing of the 113 kDa peptide to an enzymatically active 106 kDa form of the protein. Processing would occur near the middle of the Gln-rich repetitive element.

It carries out the reaction [(1-&gt;4)-alpha-D-glucosyl](n) + phosphate = [(1-&gt;4)-alpha-D-glucosyl](n-1) + alpha-D-glucose 1-phosphate. Its function is as follows. Phosphorylase is an important allosteric enzyme in carbohydrate metabolism. Enzymes from different sources differ in their regulatory mechanisms and in their natural substrates. However, all known phosphorylases share catalytic and structural properties. The protein is Glycogen phosphorylase 2 (glpD) of Dictyostelium discoideum (Social amoeba).